Here is a 354-residue protein sequence, read N- to C-terminus: Inactive ADP-ribosyltransferase ARH2 (354 aa).

Position 27 is a phosphoserine (Ser27).

This sequence belongs to the ADP-ribosylglycohydrolase family.

Its subcellular location is the cytoplasm. It localises to the myofibril. The protein resides in the sarcomere. Its function is as follows. Required for myofibril assembly and outgrowth of the cardiac chambers in the developing heart. Appears to be catalytically inactive, showing no activity against O-acetyl-ADP-ribose. The protein is Inactive ADP-ribosyltransferase ARH2 (ADPRHL1) of Bos taurus (Bovine).